Consider the following 164-residue polypeptide: Thiol peroxidase (164 aa).

In terms of domain architecture, Thioredoxin spans 16-162 (LQVGDIAKDF…YEAAINAAKI (147 aa)). C58 acts as the Cysteine sulfenic acid (-SOH) intermediate in catalysis. Cysteines 58 and 92 form a disulfide.

This sequence belongs to the peroxiredoxin family. Tpx subfamily. In terms of assembly, homodimer.

It carries out the reaction a hydroperoxide + [thioredoxin]-dithiol = an alcohol + [thioredoxin]-disulfide + H2O. Its function is as follows. Thiol-specific peroxidase that catalyzes the reduction of hydrogen peroxide and organic hydroperoxides to water and alcohols, respectively. Plays a role in cell protection against oxidative stress by detoxifying peroxides. The protein is Thiol peroxidase of Streptococcus agalactiae serotype III (strain NEM316).